Reading from the N-terminus, the 279-residue chain is MATSLQTKYTLNPITNNIPRSHRPSFLRVTSTTNSQPNHEMKLVVEQRLVNPPLSNDPTLQSTWTHRLWVAAGCTTVFVSFSKSIIGAFGSHLWLEPSLAGFAGYILADLGSGVYHWATDNYGDESTPLVGIHIEDSQDHHKCPWTITKRQFANNLHFMARGTTLIVLPLDLAFDDHVVHGFVSMFAFCVLFCQLFHAWAHGTKSKLPPLVVGLQDIGLLVSRIHHMNHHRAPYNNNYCVVSGVWNKVLDESNVFKAMEMVLYIQLGVRPRSWTEPNYE.

A chloroplast-targeting transit peptide spans 1 to 30; that stretch reads MATSLQTKYTLNPITNNIPRSHRPSFLRVT. 3 helical membrane passes run 68 to 90, 98 to 118, and 178 to 198; these read LWVA…GAFG, SLAG…YHWA, and VVHG…LFHA.

Belongs to the fatty acid desaturase CarF family.

The protein resides in the plastid. It localises to the chloroplast membrane. The protein operates within lipid metabolism; fatty acid metabolism. Functionally, fatty acid desaturase involved in the production of chloroplast-specific phosphatidylglycerol molecular species. Catalyzes the formation of a trans double bond introduced close to the carboxyl group of palmitic acid, which is specifically esterified to the sn-2 glyceryl carbon of phosphatidylglycerol. This Arabidopsis thaliana (Mouse-ear cress) protein is Fatty acid desaturase 4-like 2, chloroplastic (FAD4L2).